Reading from the N-terminus, the 795-residue chain is Phenylalanine--tRNA ligase beta subunit (795 aa).

The 110-residue stretch at 39-148 (AGTFNGVVVG…LDAPIGTDLR (110 aa)) folds into the tRNA-binding domain. In terms of domain architecture, B5 spans 401–476 (PKVNTVQLRR…RIYGYNSIPN (76 aa)). D454, D460, E463, and E464 together coordinate Mg(2+). The region spanning 701–794 (SKFPANRRDL…VKQRFNAELR (94 aa)) is the FDX-ACB domain.

This sequence belongs to the phenylalanyl-tRNA synthetase beta subunit family. Type 1 subfamily. In terms of assembly, tetramer of two alpha and two beta subunits. Mg(2+) serves as cofactor.

It is found in the cytoplasm. It carries out the reaction tRNA(Phe) + L-phenylalanine + ATP = L-phenylalanyl-tRNA(Phe) + AMP + diphosphate + H(+). This is Phenylalanine--tRNA ligase beta subunit (pheT) from Haemophilus influenzae (strain ATCC 51907 / DSM 11121 / KW20 / Rd).